Here is a 404-residue protein sequence, read N- to C-terminus: Probable tRNA sulfurtransferase (404 aa).

Positions Glu-61–Glu-166 constitute a THUMP domain. ATP is bound by residues Leu-184–Leu-185, His-209–Phe-210, Arg-266, Gly-288, and Gln-297.

Belongs to the ThiI family.

Its subcellular location is the cytoplasm. It carries out the reaction [ThiI sulfur-carrier protein]-S-sulfanyl-L-cysteine + a uridine in tRNA + 2 reduced [2Fe-2S]-[ferredoxin] + ATP + H(+) = [ThiI sulfur-carrier protein]-L-cysteine + a 4-thiouridine in tRNA + 2 oxidized [2Fe-2S]-[ferredoxin] + AMP + diphosphate. It catalyses the reaction [ThiS sulfur-carrier protein]-C-terminal Gly-Gly-AMP + S-sulfanyl-L-cysteinyl-[cysteine desulfurase] + AH2 = [ThiS sulfur-carrier protein]-C-terminal-Gly-aminoethanethioate + L-cysteinyl-[cysteine desulfurase] + A + AMP + 2 H(+). Its pathway is cofactor biosynthesis; thiamine diphosphate biosynthesis. Its function is as follows. Catalyzes the ATP-dependent transfer of a sulfur to tRNA to produce 4-thiouridine in position 8 of tRNAs, which functions as a near-UV photosensor. Also catalyzes the transfer of sulfur to the sulfur carrier protein ThiS, forming ThiS-thiocarboxylate. This is a step in the synthesis of thiazole, in the thiamine biosynthesis pathway. The sulfur is donated as persulfide by IscS. This is Probable tRNA sulfurtransferase from Bacillus cereus (strain ZK / E33L).